Reading from the N-terminus, the 162-residue chain is Cytochrome c-type biogenesis protein CcmE (162 aa).

Residues 1 to 7 lie on the Cytoplasmic side of the membrane; that stretch reads MTRKQRR. The chain crosses the membrane as a helical; Signal-anchor for type II membrane protein span at residues 8–28; the sequence is LTMIGGALVVLGIAAALVLNA. The Periplasmic portion of the chain corresponds to 29-162; the sequence is LRDSIVFFST…EASSKQEVSQ (134 aa). 2 residues coordinate heme: histidine 122 and tyrosine 126. Positions 140 to 162 are disordered; sequence HWKDDYGAQPGAAEASSKQEVSQ.

The protein belongs to the CcmE/CycJ family.

It localises to the cell inner membrane. In terms of biological role, heme chaperone required for the biogenesis of c-type cytochromes. Transiently binds heme delivered by CcmC and transfers the heme to apo-cytochromes in a process facilitated by CcmF and CcmH. This chain is Cytochrome c-type biogenesis protein CcmE, found in Nitrobacter winogradskyi (strain ATCC 25391 / DSM 10237 / CIP 104748 / NCIMB 11846 / Nb-255).